A 228-amino-acid polypeptide reads, in one-letter code: Small ribosomal subunit protein uS3 (228 aa).

The region spanning 39–107 (TREYLQDKLK…PVHINIEEIR (69 aa)) is the KH type-2 domain.

The protein belongs to the universal ribosomal protein uS3 family. Part of the 30S ribosomal subunit. Forms a tight complex with proteins S10 and S14.

In terms of biological role, binds the lower part of the 30S subunit head. Binds mRNA in the 70S ribosome, positioning it for translation. The chain is Small ribosomal subunit protein uS3 from Pseudomonas putida (strain ATCC 700007 / DSM 6899 / JCM 31910 / BCRC 17059 / LMG 24140 / F1).